The following is a 172-amino-acid chain: C-phycocyanin beta chain (172 aa).

(2R,3E)-phycocyanobilin contacts are provided by residues Asn35, Asp39, Asn72, Arg77, Cys82, 82–88, 149–151, and Cys153; these read CLRDMEI and TTG. Position 72 is an N4-methylasparagine (Asn72).

The protein belongs to the phycobiliprotein family. In terms of assembly, heterodimer of an alpha and a beta subunit. Dimers further assemble into trimers and the trimers into hexamers. The basic functional unit of phycobiliproteins is a ring-shaped hexamer formed from two back-to-back trimers contacting via the alpha chain subunits. The trimers are composed of alpha/beta subunit heterodimers arranged around a three-fold axis of symmetry. The phycoerythrins also contain a gamma subunit which is located in the center of the hexamer. In terms of processing, contains two covalently linked phycocyanobilin chromophores.

Its subcellular location is the plastid. The protein resides in the chloroplast thylakoid membrane. Functionally, light-harvesting photosynthetic tetrapyrrole chromophore-protein from the phycobiliprotein complex (phycobilisome, PBS). Phycocyanin is the major phycobiliprotein in the PBS rod. The sequence is that of C-phycocyanin beta chain (cpcB) from Galdieria sulphuraria (Red alga).